We begin with the raw amino-acid sequence, 192 residues long: GTP cyclohydrolase-2 (192 aa).

50-54 (RLHSE) is a GTP binding site. Zn(2+) is bound by residues Cys-55, Cys-66, and Cys-68. GTP is bound by residues 92–94 (EGR) and Thr-114. The active-site Proton acceptor is Asp-126. Arg-128 (nucleophile) is an active-site residue. Residues Thr-149 and Lys-154 each contribute to the GTP site.

The protein belongs to the GTP cyclohydrolase II family. Zn(2+) is required as a cofactor.

It catalyses the reaction GTP + 4 H2O = 2,5-diamino-6-hydroxy-4-(5-phosphoribosylamino)-pyrimidine + formate + 2 phosphate + 3 H(+). Its pathway is cofactor biosynthesis; riboflavin biosynthesis; 5-amino-6-(D-ribitylamino)uracil from GTP: step 1/4. In terms of biological role, catalyzes the conversion of GTP to 2,5-diamino-6-ribosylamino-4(3H)-pyrimidinone 5'-phosphate (DARP), formate and pyrophosphate. The polypeptide is GTP cyclohydrolase-2 (Helicobacter pylori (strain P12)).